A 468-amino-acid polypeptide reads, in one-letter code: MAQVQGKIVQCIGAVVDVEFPRDQMPKVYDALKLEGSPLTLEVQQQLGDGVVRTIALGSSDGLKRGLMVTNTGNPITVPVGKATLGRIMDVLGNPIDERGPVDQSLTASIHRKAPAYDELSPSQELLETGIKVIDLVCPFAKGGKVGLFGGAGVGKTVNMMELINNIAKAHSGLSVFAGVGERTREGNDFYHEMADSGVVNLENLGESKVAMVYGQMNEPPGNRLRVALTGLTIAESFRDEGRDVLFFVDNIYRYTLAGTEVSALLGRMPSAVGYQPTLAEEMGRLQERITSTKVGSITSIQAVYVPADDLTDPSPATTFAHLDSTVVLSRDIAALGIYPAVDPLDSTSRQLDPQVVGEEHYQVARQVQGTLQRYKELRDIIAILGMDELAPEDKLVVARARKIQRFLSQPFHVAEVFTGSPGKYVPLSETIRGFKMIVAGECDHLPEQAFYMVGTIDEAFEKAKKVA.

Gly150–Thr157 lines the ATP pocket.

The protein belongs to the ATPase alpha/beta chains family. F-type ATPases have 2 components, CF(1) - the catalytic core - and CF(0) - the membrane proton channel. CF(1) has five subunits: alpha(3), beta(3), gamma(1), delta(1), epsilon(1). CF(0) has three main subunits: a(1), b(2) and c(9-12). The alpha and beta chains form an alternating ring which encloses part of the gamma chain. CF(1) is attached to CF(0) by a central stalk formed by the gamma and epsilon chains, while a peripheral stalk is formed by the delta and b chains.

Its subcellular location is the cell inner membrane. The enzyme catalyses ATP + H2O + 4 H(+)(in) = ADP + phosphate + 5 H(+)(out). Functionally, produces ATP from ADP in the presence of a proton gradient across the membrane. The catalytic sites are hosted primarily by the beta subunits. This is ATP synthase subunit beta from Acidovorax ebreus (strain TPSY) (Diaphorobacter sp. (strain TPSY)).